Reading from the N-terminus, the 245-residue chain is 1-(5-phosphoribosyl)-5-[(5-phosphoribosylamino)methylideneamino] imidazole-4-carboxamide isomerase (245 aa).

D8 serves as the catalytic Proton acceptor. The active-site Proton donor is D129.

Belongs to the HisA/HisF family.

It localises to the cytoplasm. It catalyses the reaction 1-(5-phospho-beta-D-ribosyl)-5-[(5-phospho-beta-D-ribosylamino)methylideneamino]imidazole-4-carboxamide = 5-[(5-phospho-1-deoxy-D-ribulos-1-ylimino)methylamino]-1-(5-phospho-beta-D-ribosyl)imidazole-4-carboxamide. It participates in amino-acid biosynthesis; L-histidine biosynthesis; L-histidine from 5-phospho-alpha-D-ribose 1-diphosphate: step 4/9. In Rhodopseudomonas palustris (strain BisB5), this protein is 1-(5-phosphoribosyl)-5-[(5-phosphoribosylamino)methylideneamino] imidazole-4-carboxamide isomerase.